The chain runs to 227 residues: MSTSLTWHDVIGKEKEQPYFHETLAFVAAERQAGKTIYPPQKDVFNAFRYTELADVKVVILGQDPYHGPNQAHGLSFSVLPGVPAPPSLVNMYKELATDIPGFERPSHGCLQSWAEQGVLLLNTVLTVEGGQAHSHAKLGWETFTDKVIAALNENREGVVFLLWGAHAQKKGNFIDSNRHHVLKAPHPSPLSAHRGFLGCRHFSQANQLLVQQGLQPIDWLPQLPQS.

Aspartate 64 acts as the Proton acceptor in catalysis.

The protein belongs to the uracil-DNA glycosylase (UDG) superfamily. UNG family.

It localises to the cytoplasm. It catalyses the reaction Hydrolyzes single-stranded DNA or mismatched double-stranded DNA and polynucleotides, releasing free uracil.. Functionally, excises uracil residues from the DNA which can arise as a result of misincorporation of dUMP residues by DNA polymerase or due to deamination of cytosine. The protein is Uracil-DNA glycosylase of Serratia proteamaculans (strain 568).